The chain runs to 546 residues: MSSFQSTAAVRACARRAASTTSAATLASTTCRAAASRIQLQGQRSAGLVPKSWTRFSSSSIANDNQQKMLASHLQTADPVMYDIIEKEKQRQKQFINLIPSENFTSQAVLDALGSPMQNKYSEGYPGARYYGGNEFIDASERLCQDRALETFGLDPKEWGVNVQALSGAPANLYVYSALMDTHDRLMGLDLPHGGHLSHGYQTPTKKISFISKYFETLPYRLDEKTGYIDYNKLEELAITYRPKIIVAGASAYSRLIDYARLREICDKVNAYLMADMAHISGLVAAKVMPGPFTHADIVTTTSHKSLRGPRGAMIFFRRGVRRTNKKGEEELYNLETPINASVFPGHQGGPHNHTIAALAVALKQAQTPEFRAYQSQVLANATALAARLGEPKDKNGLGYTIVSGGTDNHLVLIDLKPQGIDGSRVERVLELVGVAANKNTVPGDKSALTPGGLRIGTPAMTTRGFTEEDFARVADIIDRAVTIAVRINKAAKEDAVKKGNEKAANRVKTFMDYLGNGETDPEIVQLRSEVESWVGTYPCPWDQSS.

The N-terminal 64 residues, 1-64 (MSSFQSTAAV…RFSSSSIAND (64 aa)), are a transit peptide targeting the mitochondrion. N6-(pyridoxal phosphate)lysine is present on Lys305.

The protein belongs to the SHMT family. In terms of assembly, homotetramer. The cofactor is pyridoxal 5'-phosphate.

It localises to the mitochondrion. It catalyses the reaction (6R)-5,10-methylene-5,6,7,8-tetrahydrofolate + glycine + H2O = (6S)-5,6,7,8-tetrahydrofolate + L-serine. The protein operates within one-carbon metabolism; tetrahydrofolate interconversion. Functionally, interconversion of serine and glycine. This chain is Putative serine hydroxymethyltransferase, mitochondrial (cbs-2), found in Neurospora crassa (strain ATCC 24698 / 74-OR23-1A / CBS 708.71 / DSM 1257 / FGSC 987).